Consider the following 343-residue polypeptide: N(4)-bis(aminopropyl)spermidine synthase (343 aa).

The protein belongs to the branched-chain polyamine synthase family.

The protein localises to the cytoplasm. It catalyses the reaction 2 S-adenosyl 3-(methylsulfanyl)propylamine + spermidine = N(4)-bis(aminopropyl)spermidine + 2 S-methyl-5'-thioadenosine + 2 H(+). It functions in the pathway amine and polyamine biosynthesis. Its function is as follows. Involved in the biosynthesis of branched-chain polyamines, which support the growth of thermophiles under high-temperature conditions. Catalyzes the sequential condensation of spermidine with the aminopropyl groups of decarboxylated S-adenosylmethionines to produce N(4)-bis(aminopropyl)spermidine via N(4)-aminopropylspermidine. In Thermus thermophilus, this protein is N(4)-bis(aminopropyl)spermidine synthase.